We begin with the raw amino-acid sequence, 457 residues long: MTVTVRFAPSPTGRIHIGNARTALFNWLFALNNKGRFIQRFDDTDIGRSKQEFADAILYDLHWLGIFPDATEYQSRRFEVYDAAVERLKAAGVLYACYETPEELDLRRKVRRTRGLPPVYGREALALTHEQVAEYQADGRRPHWRFLLPNFTGDPLQPERTEVHWKDLVRGEETVDLASLSDPVLVREDGTYLYTLPSVVDDIEMGVSHVIRGDDHVTNTGVQIALFKALGTEPPVFGHHNLLTTVSGEGLSKRTGALSIESLREDGIEPMAVASLAVLVGTSENVAAAHDLTELAGHFDPAATSKSSAKFDPDELFVLNRVLMHHMPFDEARDRLMVLGISGEQAEPFWLAVRGNLDRLADAVGWWRILREGPQDRPEFSDDDRDFLGQAFEVLPEEPWNGTVWKDWTGKIREATGRKGKGLFMPLRLALTGLPSGPELADLLPLMGREGTLARRP.

The short motif at 9-19 (PSPTGRIHIGN) is the 'HIGH' region element. Residues 250 to 254 (GLSKR) carry the 'KMSKS' region motif. Lysine 253 contributes to the ATP binding site.

It belongs to the class-I aminoacyl-tRNA synthetase family. Glutamate--tRNA ligase type 1 subfamily. In terms of assembly, monomer.

The protein resides in the cytoplasm. The enzyme catalyses tRNA(Glu) + L-glutamate + ATP = L-glutamyl-tRNA(Glu) + AMP + diphosphate. Its function is as follows. Catalyzes the attachment of glutamate to tRNA(Glu) in a two-step reaction: glutamate is first activated by ATP to form Glu-AMP and then transferred to the acceptor end of tRNA(Glu). This is Glutamate--tRNA ligase 2 from Mesorhizobium japonicum (strain LMG 29417 / CECT 9101 / MAFF 303099) (Mesorhizobium loti (strain MAFF 303099)).